Reading from the N-terminus, the 229-residue chain is Cytidylate kinase (229 aa).

12 to 20 (GPSGSGKGT) provides a ligand contact to ATP.

Belongs to the cytidylate kinase family. Type 1 subfamily.

It is found in the cytoplasm. It catalyses the reaction CMP + ATP = CDP + ADP. It carries out the reaction dCMP + ATP = dCDP + ADP. This chain is Cytidylate kinase, found in Pseudomonas fluorescens (strain SBW25).